The primary structure comprises 366 residues: 2-oxoglutarate synthase subunit KorA (366 aa).

As to quaternary structure, heterotetramer of the KorA, KorB, KorC and KorD subunits.

It catalyses the reaction 2 oxidized [2Fe-2S]-[ferredoxin] + 2-oxoglutarate + CoA = succinyl-CoA + 2 reduced [2Fe-2S]-[ferredoxin] + CO2 + H(+). This Methanocaldococcus jannaschii (strain ATCC 43067 / DSM 2661 / JAL-1 / JCM 10045 / NBRC 100440) (Methanococcus jannaschii) protein is 2-oxoglutarate synthase subunit KorA (korA).